Here is a 1154-residue protein sequence, read N- to C-terminus: Voltage-gated inwardly rectifying potassium channel KCNH2 (1154 aa).

Over 1–403 the chain is Cytoplasmic; that stretch reads MPVRRGHVAP…RIHRWTILHY (403 aa). The region spanning 41–70 is the PAS domain; it reads VIYCNDGFCELCGYSRAEVMQRPCTCDFLH. Residues 92–144 form the PAC domain; the sequence is RKVEIAFYRKDGSCFLCLVDVVPVKNEDGAVIMFILNFEVVMEKDMVGSPARD. The interval 233–312 is disordered; that stretch reads ALVGSGSPPA…ASTGAMHPLR (80 aa). Position 239 is a phosphoserine (Ser239). Positions 258–269 are enriched in polar residues; sequence PDGSGSSCSLAR. Phosphoserine occurs at positions 283, 284, 320, and 351. Residues 404 to 424 form a helical membrane-spanning segment; sequence SPFKAVWDWLILLLVIYTAVF. Topologically, residues 425–450 are extracellular; that stretch reads TPYSAAFLLKETEEGSQAPDCGYACQ. The helical transmembrane segment at 451 to 471 threads the bilayer; sequence PLAVVDLIVDIMFIVDILINF. The Cytoplasmic portion of the chain corresponds to 472–495; the sequence is RTTYVNANEEVVSHPGRIAVHYFK. The chain crosses the membrane as a helical span at residues 496 to 516; that stretch reads GWFLIDMVAAIPFDLLIFGSG. Over 517 to 520 the chain is Extracellular; it reads SEEL. The chain crosses the membrane as a helical; Voltage-sensor span at residues 521-541; the sequence is IGLLKTARLLRLVRVARKLDR. At 542–547 the chain is on the cytoplasmic side; the sequence is YSEYGA. Residues 548–568 traverse the membrane as a helical segment; the sequence is AVLFLLMCTFALIAHWLACIW. At 569–611 the chain is on the extracellular side; that stretch reads YAIGNMEQPNMDSHIGWLHNLGDQIGKPYNSSGLGGPSIKDKY. The pore-forming intramembrane region spans 612–632; the sequence is VTALYFTFSSLTSVGFGNVSP. The Selectivity filter motif lies at 624–629; it reads SVGFGN. The Extracellular segment spans residues 633–638; the sequence is NTNSEK. Residues 639-659 form a helical membrane-spanning segment; it reads IFSICVMLIGSLMYASIFGNV. Residues 660–1154 are Cytoplasmic-facing; that stretch reads SAIIQRLYSG…LHRHGSDPGS (495 aa). The interval 742-842 is cNMP-binding domain; the sequence is PFRGATKGCL…IHRDDLLEVL (101 aa). The disordered stretch occupies residues 870 to 985; that stretch reads GSPGSTELEG…DVEKSSDTCN (116 aa). Phosphoserine is present on residues Ser871 and Ser874. Residues 883 to 892 show a composition bias toward basic residues; it reads RQRKRKLSFR. A compositionally biased stretch (gly residues) spans 916–927; the sequence is GPSGRGQQGGPW. Residues 928–939 are compositionally biased toward low complexity; the sequence is GESLSSGPSSPE. At Arg1014 the chain carries Omega-N-methylarginine. Positions 1037–1064 form a coiled coil; that stretch reads RGDVESRLDALQRQLNRLETRLSADMAT. Residues 1125-1154 are disordered; that stretch reads DGPARRLSLPGQLGALTSQPLHRHGSDPGS. The residue at position 1132 (Ser1132) is a Phosphoserine.

This sequence belongs to the potassium channel family. H (Eag) (TC 1.A.1.20) subfamily. Kv11.1/KCNH2 sub-subfamily. As to quaternary structure, the potassium channel is probably composed of a homo- or heterotetrameric complex of pore-forming alpha subunits that can associate with modulating beta subunits. Interacts with DNAJB12 and DNAJB14; chaperones DNAJB12 and DNAJB14 promote tetramerization. Heteromultimer with KCNH6/ERG2 and KCNH7/ERG3. Interacts with ALG10B. Forms a stable complex with KCNE1 or KCNE2, and that this heteromultimerization regulates Inward rectifier potassium channel activity. Interacts with CANX. The core-glycosylated, but not the fully glycosylated form interacts with RNF207. Interacts with NDFIP1 and NDFIP2; this interaction decreases the cell membrane expression by targeting KCNH2, through interaction with NEDD4L, for the degradation through the multivesicular bodies (MVBs)-lysosomal pathway. Phosphorylated on serine and threonine residues. Phosphorylation by PKA inhibits ion conduction.

It is found in the cell membrane. The catalysed reaction is K(+)(in) = K(+)(out). In terms of biological role, pore-forming (alpha) subunit of voltage-gated inwardly rectifying potassium channel. Characterized by unusual gating kinetics by producing relatively small outward currents during membrane depolarization and large inward currents during subsequent repolarization which reflect a rapid inactivation during depolarization and quick recovery from inactivation but slow deactivation (closing) during repolarization. Channel properties are modulated by cAMP and subunit assembly. Forms a stable complex with KCNE1 or KCNE2, and that this heteromultimerization regulates inward rectifier potassium channel activity. The chain is Voltage-gated inwardly rectifying potassium channel KCNH2 from Sus scrofa (Pig).